The primary structure comprises 548 residues: Chaperonin GroEL (548 aa).

ATP contacts are provided by residues 30-33 (TLGP), lysine 51, 87-91 (DGTTT), glycine 415, 479-481 (NAA), and aspartate 495.

Belongs to the chaperonin (HSP60) family. Forms a cylinder of 14 subunits composed of two heptameric rings stacked back-to-back. Interacts with the co-chaperonin GroES.

Its subcellular location is the cytoplasm. It carries out the reaction ATP + H2O + a folded polypeptide = ADP + phosphate + an unfolded polypeptide.. Functionally, together with its co-chaperonin GroES, plays an essential role in assisting protein folding. The GroEL-GroES system forms a nano-cage that allows encapsulation of the non-native substrate proteins and provides a physical environment optimized to promote and accelerate protein folding. The sequence is that of Chaperonin GroEL from Pseudomonas fluorescens (strain Pf0-1).